The chain runs to 234 residues: Sugar fermentation stimulation protein homolog (234 aa).

The protein belongs to the SfsA family.

The protein is Sugar fermentation stimulation protein homolog of Shewanella baltica (strain OS155 / ATCC BAA-1091).